A 449-amino-acid polypeptide reads, in one-letter code: MHPSSRANGPAPHKPYNPFYLQLYFWVIIAIILGALLGHCYPAVGQQLKPLGDAFIKLVKMIISPVIFLTIVTGIASVAHVGTVARVFGKAMVYFLFFSTLALLLGLVVAHVVHPGAGMNINPVDLHQGEIANYVEKSHDLTLVGFLMDIIPKTLLSPFVGDNILQVLFVAVLFGIALALAGERGKPVLNLLDALTVPVFKLVQMLMKMAPIGAFGAIAFTIGKYGVDSLVNLGWLVGSFYLTSLLFVLVILGAVSWLCGFSILKLIRYLKAELLLVLGTSSSESALPSLMEKMVQAGCRKSVVGLVVPTGYSFNLDGTNIYMTLAALFIAQATNTELTPAHQLALFLVAMLSSKGAAGVSGAGFITLAATLAVVPEVPIAGMALILGVDRFMSECRSLTNFIGNAVATLVVSRWENALNHEQLKIALDGNEAAYQSLHAKDAEPSLSR.

Transmembrane regions (helical) follow at residues 18–38 (PFYL…ALLG), 61–81 (MIIS…VAHV), 93–113 (VYFL…AHVV), 159–179 (FVGD…IALA), 202–222 (LVQM…AFTI), 244–264 (SLLF…FSIL), 311–331 (GYSF…LFIA), and 369–389 (AATL…ILGV).

Belongs to the dicarboxylate/amino acid:cation symporter (DAACS) (TC 2.A.23) family.

It is found in the cell inner membrane. Responsible for the transport of dicarboxylates such as succinate, fumarate, and malate from the periplasm across the membrane. The chain is C4-dicarboxylate transport protein from Xylella fastidiosa (strain M12).